The primary structure comprises 214 residues: Leucyl/phenylalanyl-tRNA--protein transferase (214 aa).

This sequence belongs to the L/F-transferase family.

The protein resides in the cytoplasm. It carries out the reaction N-terminal L-lysyl-[protein] + L-leucyl-tRNA(Leu) = N-terminal L-leucyl-L-lysyl-[protein] + tRNA(Leu) + H(+). The catalysed reaction is N-terminal L-arginyl-[protein] + L-leucyl-tRNA(Leu) = N-terminal L-leucyl-L-arginyl-[protein] + tRNA(Leu) + H(+). The enzyme catalyses L-phenylalanyl-tRNA(Phe) + an N-terminal L-alpha-aminoacyl-[protein] = an N-terminal L-phenylalanyl-L-alpha-aminoacyl-[protein] + tRNA(Phe). Its function is as follows. Functions in the N-end rule pathway of protein degradation where it conjugates Leu, Phe and, less efficiently, Met from aminoacyl-tRNAs to the N-termini of proteins containing an N-terminal arginine or lysine. This is Leucyl/phenylalanyl-tRNA--protein transferase from Cereibacter sphaeroides (strain KD131 / KCTC 12085) (Rhodobacter sphaeroides).